Consider the following 245-residue polypeptide: Orotidine 5'-phosphate decarboxylase (245 aa).

Substrate contacts are provided by residues Asp-22, Lys-44, 71-80 (DLKFHDIPNT), Thr-131, Arg-192, Gln-201, Gly-221, and Arg-222. Catalysis depends on Lys-73, which acts as the Proton donor.

It belongs to the OMP decarboxylase family. Type 1 subfamily. In terms of assembly, homodimer.

The enzyme catalyses orotidine 5'-phosphate + H(+) = UMP + CO2. It functions in the pathway pyrimidine metabolism; UMP biosynthesis via de novo pathway; UMP from orotate: step 2/2. Catalyzes the decarboxylation of orotidine 5'-monophosphate (OMP) to uridine 5'-monophosphate (UMP). In Salmonella choleraesuis (strain SC-B67), this protein is Orotidine 5'-phosphate decarboxylase.